Reading from the N-terminus, the 561-residue chain is MKKKVVLLTLLSCFSTSGLSANETGNLGSISESRRALQDSQREINQLIEQNRYQQLQEKAVNISPTPTLITESEHCLPIKGVYIQGITLLTEKDLNSLSPLPDQCIKSADINRLVKELTQRYLQHGYITARIQFLRPNQHGELGLYAIEGFVERIEGGDRGVNTTLLFPRIKGQPLKLATLDQGLDQANRLQSNKVTVDILPGTELGGSVIKLSNQRKSPWHLNIASDNYGQKNSGRWLIRTNASLDSPLGLSDFVSLNANITTDNPNTRFNRAYTLLYSIPYGGFTFSSFGSYSEYQFHQKLQTRTVNLYGDTTQVGIRGDYAFSRSQKQIDTLNIQVTHKRIRNYFSQIRLDLSSPKLTTIELGINHLQIIPNGVLSTNLSVEKAVGWFGAEETPYIANGNGNDYRFTKVKLFTNWYQRFSLWHSTFLFNSTFLGQYSHDTLPGVEWLSLTDKNAIRGFDQSTLSGDNGGYLRNTLSYPYRLNHFSITPRIGVDIGQVKQHGNYKGWQGGYGLSSGLNIQYQQAQLDLEVAKGELLYHQTNSNKTKDPTQLLVKFSYLF.

Residues 1–17 (MKKKVVLLTLLSCFSTS) form the signal peptide. The POTRA domain maps to 77 to 150 (LPIKGVYIQG…GELGLYAIEG (74 aa)).

This sequence belongs to the TPS (TC 1.B.20) family.

Its subcellular location is the cell outer membrane. Its function is as follows. Interacts with the cell-bound hemolysin. Necessary for the extracellular secretion and activation of the hemolysin. In terms of biological role, probable member of a two partner secretion pathway (TPS) in which it mediates the secretion of hemolysin. The chain is Hemolysin transporter protein HpmB (hpmB) from Proteus mirabilis.